The following is a 243-amino-acid chain: Probable transcriptional regulatory protein Patl_0550 (243 aa).

The protein belongs to the TACO1 family.

The protein localises to the cytoplasm. The chain is Probable transcriptional regulatory protein Patl_0550 from Pseudoalteromonas atlantica (strain T6c / ATCC BAA-1087).